The following is a 391-amino-acid chain: Protein ABCI12, chloroplastic (391 aa).

The transit peptide at 1–63 (MNHSNLANPT…LAAKRVFIVR (63 aa)) directs the protein to the chloroplast. 5 consecutive transmembrane segments (helical) span residues 134–154 (ANLVVRLGLVLCTALLSILVL), 168–188 (LLSGILFITLGLGSDGAPPML), 229–249 (VGSTAACLTFIIFQSASICLA), 263–283 (FLFPLTYIGVPVSEIILTLLL), and 370–390 (FASVLCLIGVISTALLSEYFL).

It is found in the plastid. The protein localises to the chloroplast. Its subcellular location is the membrane. In Arabidopsis thaliana (Mouse-ear cress), this protein is Protein ABCI12, chloroplastic (ABCI12).